The primary structure comprises 320 residues: ATP-dependent 6-phosphofructokinase (320 aa).

ATP is bound at residue Gly-12. 22–26 (RAVVR) lines the ADP pocket. ATP contacts are provided by residues 73-74 (RF) and 103-106 (GDGS). Mg(2+) is bound at residue Asp-104. 126 to 128 (TID) contacts substrate. Asp-128 (proton acceptor) is an active-site residue. Arg-155 is a binding site for ADP. Substrate contacts are provided by residues Arg-163 and 170–172 (MGR). ADP-binding positions include 186-188 (GAE) and 214-216 (KNH). Substrate is bound by residues Glu-223, Arg-244, and 250–253 (HIQR).

The protein belongs to the phosphofructokinase type A (PFKA) family. ATP-dependent PFK group I subfamily. Prokaryotic clade 'B1' sub-subfamily. In terms of assembly, homotetramer. It depends on Mg(2+) as a cofactor.

It localises to the cytoplasm. The catalysed reaction is beta-D-fructose 6-phosphate + ATP = beta-D-fructose 1,6-bisphosphate + ADP + H(+). It functions in the pathway carbohydrate degradation; glycolysis; D-glyceraldehyde 3-phosphate and glycerone phosphate from D-glucose: step 3/4. Its activity is regulated as follows. Allosterically activated by ADP and other diphosphonucleosides, and allosterically inhibited by phosphoenolpyruvate. Functionally, catalyzes the phosphorylation of D-fructose 6-phosphate to fructose 1,6-bisphosphate by ATP, the first committing step of glycolysis. This chain is ATP-dependent 6-phosphofructokinase, found in Teredinibacter turnerae (strain ATCC 39867 / T7901).